A 422-amino-acid polypeptide reads, in one-letter code: UDP-N-acetylglucosamine 1-carboxyvinyltransferase (422 aa).

22 to 23 (KN) contacts phosphoenolpyruvate. R92 contacts UDP-N-acetyl-alpha-D-glucosamine. Catalysis depends on C116, which acts as the Proton donor. Position 116 is a 2-(S-cysteinyl)pyruvic acid O-phosphothioketal (C116). UDP-N-acetyl-alpha-D-glucosamine is bound by residues 121–125 (RPIDL), D307, and L329.

Belongs to the EPSP synthase family. MurA subfamily.

It localises to the cytoplasm. It catalyses the reaction phosphoenolpyruvate + UDP-N-acetyl-alpha-D-glucosamine = UDP-N-acetyl-3-O-(1-carboxyvinyl)-alpha-D-glucosamine + phosphate. It functions in the pathway cell wall biogenesis; peptidoglycan biosynthesis. Its function is as follows. Cell wall formation. Adds enolpyruvyl to UDP-N-acetylglucosamine. The sequence is that of UDP-N-acetylglucosamine 1-carboxyvinyltransferase from Sulfurovum sp. (strain NBC37-1).